A 214-amino-acid chain; its full sequence is MPIIAVIDYDMGNLHSACKGLQEAGTQTIVSDRPEDLVSADAVVLPGVGAFDPAMQHLRSRQLIPVIQDILASGKPFLGICLGLQILFEGSEEGTEAGLGIIPGTVKRFQSEPGITIPHMGWNQLEYQQPDLPLWRHSPAQPWVYFVHSYYVDPVDPTVKAATVTHGTQTITAAIARDNLMAVQFHPEKSSTFGLQILANFVEQVQATLATPAV.

Residues 3-211 enclose the Glutamine amidotransferase type-1 domain; that stretch reads IIAVIDYDMG…VEQVQATLAT (209 aa). The active-site Nucleophile is Cys81. Residues His186 and Glu188 contribute to the active site.

As to quaternary structure, heterodimer of HisH and HisF.

Its subcellular location is the cytoplasm. It catalyses the reaction 5-[(5-phospho-1-deoxy-D-ribulos-1-ylimino)methylamino]-1-(5-phospho-beta-D-ribosyl)imidazole-4-carboxamide + L-glutamine = D-erythro-1-(imidazol-4-yl)glycerol 3-phosphate + 5-amino-1-(5-phospho-beta-D-ribosyl)imidazole-4-carboxamide + L-glutamate + H(+). The catalysed reaction is L-glutamine + H2O = L-glutamate + NH4(+). Its pathway is amino-acid biosynthesis; L-histidine biosynthesis; L-histidine from 5-phospho-alpha-D-ribose 1-diphosphate: step 5/9. Its function is as follows. IGPS catalyzes the conversion of PRFAR and glutamine to IGP, AICAR and glutamate. The HisH subunit catalyzes the hydrolysis of glutamine to glutamate and ammonia as part of the synthesis of IGP and AICAR. The resulting ammonia molecule is channeled to the active site of HisF. The chain is Imidazole glycerol phosphate synthase subunit HisH from Acaryochloris marina (strain MBIC 11017).